Here is a 358-residue protein sequence, read N- to C-terminus: MKRLVIMAAGTGGHIFPGLAIAETMKARGWQVSWLGTSHGMERELVPKAGVEMDIIEFSGLRGKGLQHTITGAFKLVASFATCFSILKRRNPGIVLGMGGYVTVPGGWMAKLRGVPVVLVNADAALLLSNKTLMPVAERVLFGFPADFGPAASKALVTGNPVRQEIISLPAPAERYAQHSGPLKVLVVGGSLGAKALNDAMPLALAMLPPEQRPVVTHQSGKKNIDALRANYAQAGVDAEVLDFINDMPRRYAEADLVICRAGAITVSELTAAGVASVLVPLLVSTTTHQRDNALWMEKQNAAIHLPQSELSAQGLAELLQGMTREKCKQMAEAAYANGRRDANAAIADVLEKLVKIT.

Residues 11–13 (TGG), arginine 163, serine 191, isoleucine 245, and glutamine 290 contribute to the UDP-N-acetyl-alpha-D-glucosamine site.

The protein belongs to the glycosyltransferase 28 family. MurG subfamily.

Its subcellular location is the cell inner membrane. The catalysed reaction is di-trans,octa-cis-undecaprenyl diphospho-N-acetyl-alpha-D-muramoyl-L-alanyl-D-glutamyl-meso-2,6-diaminopimeloyl-D-alanyl-D-alanine + UDP-N-acetyl-alpha-D-glucosamine = di-trans,octa-cis-undecaprenyl diphospho-[N-acetyl-alpha-D-glucosaminyl-(1-&gt;4)]-N-acetyl-alpha-D-muramoyl-L-alanyl-D-glutamyl-meso-2,6-diaminopimeloyl-D-alanyl-D-alanine + UDP + H(+). Its pathway is cell wall biogenesis; peptidoglycan biosynthesis. In terms of biological role, cell wall formation. Catalyzes the transfer of a GlcNAc subunit on undecaprenyl-pyrophosphoryl-MurNAc-pentapeptide (lipid intermediate I) to form undecaprenyl-pyrophosphoryl-MurNAc-(pentapeptide)GlcNAc (lipid intermediate II). This Janthinobacterium sp. (strain Marseille) (Minibacterium massiliensis) protein is UDP-N-acetylglucosamine--N-acetylmuramyl-(pentapeptide) pyrophosphoryl-undecaprenol N-acetylglucosamine transferase.